A 313-amino-acid chain; its full sequence is MTRTQYGSLRAGGLNWDSMPLKLFAGGNAKFWDPAGIDFSRDRADWESLTERERDYATRLCAQFIAGEESVTQDIQPFMSAMRAEGRLGDEMYLTQFAFEEAKHTQVFRLWLDAVGVSEDLHGYLDDLPAYREIFFDRLPDALGMLAADPSPAAQVRASVTYNHVVEGMLALTGYFAWHKICVDRGILPGMQELVHRIGDDERRHMAWGTFTCRRHVAADDANWSVFEARMNELIPIALRLTEEGFELYGDDTPFGLSLDEFMQYSADKGMRRFGTISSARGRPLAEIDLDYSPLQLEDTFAAEDRQALAATA.

Mn(2+) contacts are provided by glutamate 68, glutamate 101, and histidine 104. The 3-(O4'-tyrosyl)-valine (Val-Tyr) cross-link spans 71-162; it reads VTQDIQPFMS…AAQVRASVTY (92 aa). Glutamate 101 is a binding site for Fe cation. Positions 167, 202, and 205 each coordinate Fe cation.

The protein belongs to the ribonucleoside diphosphate reductase small chain family. R2-like ligand binding oxidase subfamily. In terms of assembly, homodimer. Fe cation is required as a cofactor. Mn(2+) serves as cofactor.

In terms of biological role, probable oxidase that might be involved in lipid metabolism. This chain is R2-like ligand binding oxidase, found in Mycobacteroides abscessus (strain ATCC 19977 / DSM 44196 / CCUG 20993 / CIP 104536 / JCM 13569 / NCTC 13031 / TMC 1543 / L948) (Mycobacterium abscessus).